The sequence spans 156 residues: Ribosomal RNA large subunit methyltransferase H (156 aa).

S-adenosyl-L-methionine is bound by residues leucine 74, glycine 105, and 124-129 (LSKLTL).

It belongs to the RNA methyltransferase RlmH family. Homodimer.

It localises to the cytoplasm. The catalysed reaction is pseudouridine(1915) in 23S rRNA + S-adenosyl-L-methionine = N(3)-methylpseudouridine(1915) in 23S rRNA + S-adenosyl-L-homocysteine + H(+). Specifically methylates the pseudouridine at position 1915 (m3Psi1915) in 23S rRNA. This is Ribosomal RNA large subunit methyltransferase H from Legionella pneumophila (strain Paris).